A 146-amino-acid polypeptide reads, in one-letter code: 3-hydroxyacyl-[acyl-carrier-protein] dehydratase FabZ (146 aa).

Histidine 46 is an active-site residue.

Belongs to the thioester dehydratase family. FabZ subfamily.

The protein resides in the cytoplasm. The catalysed reaction is a (3R)-hydroxyacyl-[ACP] = a (2E)-enoyl-[ACP] + H2O. In terms of biological role, involved in unsaturated fatty acids biosynthesis. Catalyzes the dehydration of short chain beta-hydroxyacyl-ACPs and long chain saturated and unsaturated beta-hydroxyacyl-ACPs. The chain is 3-hydroxyacyl-[acyl-carrier-protein] dehydratase FabZ from Acinetobacter baumannii (strain ATCC 17978 / DSM 105126 / CIP 53.77 / LMG 1025 / NCDC KC755 / 5377).